The following is a 61-amino-acid chain: Small ribosomal subunit protein uS14B (61 aa).

Positions 24, 27, 40, and 43 each coordinate Zn(2+).

Belongs to the universal ribosomal protein uS14 family. Zinc-binding uS14 subfamily. Part of the 30S ribosomal subunit. Contacts proteins S3 and S10. Zn(2+) is required as a cofactor.

Functionally, binds 16S rRNA, required for the assembly of 30S particles and may also be responsible for determining the conformation of the 16S rRNA at the A site. In Oceanobacillus iheyensis (strain DSM 14371 / CIP 107618 / JCM 11309 / KCTC 3954 / HTE831), this protein is Small ribosomal subunit protein uS14B.